An 87-amino-acid chain; its full sequence is Transcription factor ILI4 (87 aa).

One can recognise a bHLH domain in the interval 1 to 54; the sequence is MSSRRSSRSSVSEEEINELISKLQSLLPSSRRRGANQASTTKLLKETCSYIKSL.

This sequence belongs to the bHLH protein family. As to quaternary structure, interacts with LO9-177. As to expression, expressed in phloem of leaf blades and sheaths, lamina joints, filaments before anthesis, vasculare bundles of the ovule, lemma and palea, and embryos.

The protein localises to the cytoplasm. Atypical and probable non DNA-binding bHLH transcription factor that acts as a positive regulator of brassinosteroid (BR) response. Controls lamina inclination by participating in two BR signaling pathways involving BRI1 and RGA1. Involved in the RLI1-dependent modulation of leaf inclination by promoting lamina joint cell elongation, especially in response to phosphate (Pi) availability. The sequence is that of Transcription factor ILI4 (ILI4) from Oryza sativa subsp. japonica (Rice).